A 200-amino-acid chain; its full sequence is Recombination protein RecR (200 aa).

The segment at 58–75 adopts a C4-type zinc-finger fold; that stretch reads CPDCFCLKTSKTSSCDFC. Residues 82-177 form the Toprim domain; sequence SFLCIVATPK…KISRLALGMP (96 aa).

The protein belongs to the RecR family.

Its function is as follows. May play a role in DNA repair. It seems to be involved in an RecBC-independent recombinational process of DNA repair. It may act with RecF and RecO. The protein is Recombination protein RecR of Chlamydia muridarum (strain MoPn / Nigg).